The chain runs to 343 residues: Dihydroorotase (343 aa).

Residues histidine 13 and histidine 15 each contribute to the Zn(2+) site. Substrate is bound by residues histidine 15–arginine 17 and asparagine 41. Residues lysine 99, histidine 136, and histidine 174 each contribute to the Zn(2+) site. N6-carboxylysine is present on lysine 99. Histidine 136 contacts substrate. Leucine 219 contributes to the substrate binding site. Aspartate 247 is a Zn(2+) binding site. Aspartate 247 is an active-site residue. The substrate site is built by histidine 251 and alanine 263.

Belongs to the metallo-dependent hydrolases superfamily. DHOase family. Class II DHOase subfamily. In terms of assembly, homodimer. Zn(2+) serves as cofactor.

It carries out the reaction (S)-dihydroorotate + H2O = N-carbamoyl-L-aspartate + H(+). The protein operates within pyrimidine metabolism; UMP biosynthesis via de novo pathway; (S)-dihydroorotate from bicarbonate: step 3/3. Functionally, catalyzes the reversible cyclization of carbamoyl aspartate to dihydroorotate. This Shewanella baltica (strain OS155 / ATCC BAA-1091) protein is Dihydroorotase.